Here is a 278-residue protein sequence, read N- to C-terminus: Shikimate dehydrogenase (NADP(+)) (278 aa).

Shikimate is bound by residues 19–21 and threonine 66; that span reads SLS. The active-site Proton acceptor is the lysine 70. Shikimate contacts are provided by asparagine 91 and aspartate 106. Residues 130–134, 152–157, and leucine 222 contribute to the NADP(+) site; these read GAGGS and NRTVEK. Tyrosine 224 contributes to the shikimate binding site. Glycine 245 provides a ligand contact to NADP(+).

It belongs to the shikimate dehydrogenase family. As to quaternary structure, homodimer.

It carries out the reaction shikimate + NADP(+) = 3-dehydroshikimate + NADPH + H(+). It functions in the pathway metabolic intermediate biosynthesis; chorismate biosynthesis; chorismate from D-erythrose 4-phosphate and phosphoenolpyruvate: step 4/7. Functionally, involved in the biosynthesis of the chorismate, which leads to the biosynthesis of aromatic amino acids. Catalyzes the reversible NADPH linked reduction of 3-dehydroshikimate (DHSA) to yield shikimate (SA). The protein is Shikimate dehydrogenase (NADP(+)) of Methanococcus aeolicus (strain ATCC BAA-1280 / DSM 17508 / OCM 812 / Nankai-3).